Here is a 260-residue protein sequence, read N- to C-terminus: Acidic leucine-rich nuclear phosphoprotein 32 family member E (260 aa).

Methionine 1 bears the N-acetylmethionine mark. LRR repeat units lie at residues 18-38, 43-64, 65-87, and 89-110; these read EVTE…EGLN, ELEF…PSLN, KLRK…AEKC, and NLTY…EALQ. Lysine 68 participates in a covalent cross-link: Glycyl lysine isopeptide (Lys-Gly) (interchain with G-Cter in SUMO2). One can recognise an LRRCT domain in the interval 123–161; it reads CEITNLEDYRESIFELLQQITYLDGFDQEDNEAPDSEEE. Acidic residues-rich tracts occupy residues 149 to 208 and 218 to 240; these read DQED…EEEV and IQDE…EEEE. The tract at residues 149 to 260 is disordered; that stretch reads DQEDNEAPDS…AEDDGEEDDD (112 aa). The tract at residues 207–260 is ZID domain; it reads EVGLSYLMKDEIQDEEDDDDYVDEGEEEEEEEEEGLRGEKRKRDAEDDGEEDDD. Residues 241–251 are compositionally biased toward basic and acidic residues; sequence GLRGEKRKRDA.

It belongs to the ANP32 family. Component of a SWR1-like complex, composed of EP400, KAT5/TIP60, TRRAP, BRD8, RUVBL1, RUVBL2, ING3 and ANP32E; the complex does not contain SRCAP. Interacts with H2A.Z/H2AZ1. Interacts with the importin alpha KPNA1 and KPNA2. In terms of processing, phosphorylated. The phosphorylation is nuclear localization signal (NLS)-dependent. In terms of tissue distribution, expressed at highest levels in cerebellum and spleen. In the cerebellum, expressed mainly in granule cells and, to a lesser extent, in Purkinje cells.

It is found in the cytoplasm. The protein localises to the nucleus. Functionally, histone chaperone that specifically mediates the genome-wide removal of histone H2A.Z/H2AZ1 from the nucleosome: removes H2A.Z/H2AZ1 from its normal sites of deposition, especially from enhancer and insulator regions. Not involved in deposition of H2A.Z/H2AZ1 in the nucleosome. May stabilize the evicted H2A.Z/H2AZ1-H2B dimer, thus shifting the equilibrium towards dissociation and the off-chromatin state. Inhibits activity of protein phosphatase 2A (PP2A). Does not inhibit protein phosphatase 1. May play a role in cerebellar development and synaptogenesis. This Mus musculus (Mouse) protein is Acidic leucine-rich nuclear phosphoprotein 32 family member E (Anp32e).